The sequence spans 247 residues: MAANGEEQQTQAGRHQEVGHKSLLQSDALYQYILETSVYPREPECMKELRELTAKHPWNIMTTSADEGQFLNMLLKLINAKNTMEIGVFTGYSLLATALAIPEDGKILAMDINRENYELGLPVIQKAGLEHKIEFKEGPALPVLDQMIEDGKYHGTYDFIFVDADKDNYINYHKRLIELVKVGGLIGYDNTLWNGSVVAPADAPMRKYVRYYRDFVLELNKALAADPRIEICMLPVGDGITLCRRIK.

K21 contacts substrate. S-adenosyl-L-methionine-binding positions include T63, E85, 87–88 (GV), S93, D111, and A140. D163 contacts substrate. Position 163 (D163) interacts with a divalent metal cation. D165 serves as a coordination point for S-adenosyl-L-methionine. D189 and N190 together coordinate a divalent metal cation. Substrate is bound at residue N194.

It belongs to the class I-like SAM-binding methyltransferase superfamily. Cation-dependent O-methyltransferase family. CCoAMT subfamily. It depends on a divalent metal cation as a cofactor.

It carries out the reaction (E)-caffeoyl-CoA + S-adenosyl-L-methionine = (E)-feruloyl-CoA + S-adenosyl-L-homocysteine + H(+). Its pathway is aromatic compound metabolism; phenylpropanoid biosynthesis. Its function is as follows. Methylates caffeoyl-CoA to feruloyl-CoA and 5-hydroxyferuloyl-CoA to sinapoyl-CoA. Plays a role in the synthesis of feruloylated polysaccharides. Involved in the reinforcement of the plant cell wall. Also involved in the responding to wounding or pathogen challenge by the increased formation of cell wall-bound ferulic acid polymers. The sequence is that of Caffeoyl-CoA O-methyltransferase 2 (CCOAOMT2) from Populus trichocarpa (Western balsam poplar).